The primary structure comprises 405 residues: Phosphopentomutase (405 aa).

Mn(2+)-binding residues include aspartate 10, aspartate 303, histidine 308, aspartate 344, histidine 345, and histidine 356.

This sequence belongs to the phosphopentomutase family. Mn(2+) is required as a cofactor.

The protein localises to the cytoplasm. It carries out the reaction 2-deoxy-alpha-D-ribose 1-phosphate = 2-deoxy-D-ribose 5-phosphate. The enzyme catalyses alpha-D-ribose 1-phosphate = D-ribose 5-phosphate. It functions in the pathway carbohydrate degradation; 2-deoxy-D-ribose 1-phosphate degradation; D-glyceraldehyde 3-phosphate and acetaldehyde from 2-deoxy-alpha-D-ribose 1-phosphate: step 1/2. Its function is as follows. Isomerase that catalyzes the conversion of deoxy-ribose 1-phosphate (dRib-1-P) and ribose 1-phosphate (Rib-1-P) to deoxy-ribose 5-phosphate (dRib-5-P) and ribose 5-phosphate (Rib-5-P), respectively. The sequence is that of Phosphopentomutase from Shewanella woodyi (strain ATCC 51908 / MS32).